Consider the following 98-residue polypeptide: uncharacterized protein (98 aa).

An N-terminal signal peptide occupies residues 1–23; sequence MKKMQSIVLALSLVLVAPMAAQA. The interval 68 to 98 is disordered; sequence WHLHGPPPPPRHHKKAPHDHHGGHGPGKHHR. Over residues 77–98 the composition is skewed to basic residues; it reads PRHHKKAPHDHHGGHGPGKHHR.

It to E.coli YpeC.

This is an uncharacterized protein from Escherichia coli (strain K12).